We begin with the raw amino-acid sequence, 316 residues long: Transaldolase (316 aa).

Lys-132 (schiff-base intermediate with substrate) is an active-site residue.

It belongs to the transaldolase family. Type 1 subfamily. As to quaternary structure, homodimer.

Its subcellular location is the cytoplasm. The catalysed reaction is D-sedoheptulose 7-phosphate + D-glyceraldehyde 3-phosphate = D-erythrose 4-phosphate + beta-D-fructose 6-phosphate. The protein operates within carbohydrate degradation; pentose phosphate pathway; D-glyceraldehyde 3-phosphate and beta-D-fructose 6-phosphate from D-ribose 5-phosphate and D-xylulose 5-phosphate (non-oxidative stage): step 2/3. Transaldolase is important for the balance of metabolites in the pentose-phosphate pathway. This Vibrio vulnificus (strain CMCP6) protein is Transaldolase.